A 732-amino-acid chain; its full sequence is Coagulation factor XIII A chain (732 aa).

Residues 1-26 (MSDTPASTFGGRRAVPPNNSNAAEVD) form a disordered region. Ser-2 is subject to N-acetylserine. A propeptide spans 2–38 (SDTPASTFGGRRAVPPNNSNAAEVDLPTEELQGLVPR) (activation peptide). Residues Cys-315, His-374, and Asp-397 contribute to the active site. Ca(2+) is bound by residues Asn-437, Asp-439, Glu-486, and Glu-491. Asn-614 carries an N-linked (GlcNAc...) asparagine glycan.

The protein belongs to the transglutaminase superfamily. Transglutaminase family. As to quaternary structure, tetramer of two A chains (F13A1) and two B (F13B) chains. Requires Ca(2+) as cofactor. Post-translationally, the activation peptide is released by thrombin.

The protein resides in the cytoplasm. It localises to the secreted. It catalyses the reaction L-glutaminyl-[protein] + L-lysyl-[protein] = [protein]-L-lysyl-N(6)-5-L-glutamyl-[protein] + NH4(+). Functionally, factor XIII is activated by thrombin and calcium ion to a transglutaminase that catalyzes the formation of gamma-glutamyl-epsilon-lysine cross-links between fibrin chains, thus stabilizing the fibrin clot. Also cross-link alpha-2-plasmin inhibitor, or fibronectin, to the alpha chains of fibrin. The polypeptide is Coagulation factor XIII A chain (F13a1) (Mus musculus (Mouse)).